Consider the following 181-residue polypeptide: Oligoribonuclease (181 aa).

The 164-residue stretch at 8–171 (LIWIDLEMTG…DDIRESVAEL (164 aa)) folds into the Exonuclease domain. The active site involves tyrosine 129.

It belongs to the oligoribonuclease family.

It is found in the cytoplasm. In terms of biological role, 3'-to-5' exoribonuclease specific for small oligoribonucleotides. This chain is Oligoribonuclease, found in Yersinia enterocolitica serotype O:8 / biotype 1B (strain NCTC 13174 / 8081).